Here is a 275-residue protein sequence, read N- to C-terminus: Large ribosomal subunit protein uL2 (275 aa).

Disordered regions lie at residues 222-243 (GSVMNPTDHPHGGGEGRAPIGR) and 256-275 (GGKTRRKKPSDNMIVRKRKP).

This sequence belongs to the universal ribosomal protein uL2 family. In terms of assembly, part of the 50S ribosomal subunit. Forms a bridge to the 30S subunit in the 70S ribosome.

In terms of biological role, one of the primary rRNA binding proteins. Required for association of the 30S and 50S subunits to form the 70S ribosome, for tRNA binding and peptide bond formation. It has been suggested to have peptidyltransferase activity; this is somewhat controversial. Makes several contacts with the 16S rRNA in the 70S ribosome. In Syntrophomonas wolfei subsp. wolfei (strain DSM 2245B / Goettingen), this protein is Large ribosomal subunit protein uL2.